A 209-amino-acid chain; its full sequence is Protease (209 aa).

Active-site residues include histidine 55, aspartate 72, and cysteine 123.

The protein belongs to the peptidase C5 family. As to quaternary structure, interacts with protease cofactor pVI-C; this interaction is necessary for protease activation.

It localises to the virion. The protein localises to the host nucleus. The enzyme catalyses Cleaves proteins of the adenovirus and its host cell at two consensus sites: -Yaa-Xaa-Gly-Gly-|-Xaa- and -Yaa-Xaa-Gly-Xaa-|-Gly- (in which Yaa is Met, Ile or Leu, and Xaa is any amino acid).. Requires DNA and protease cofactor for maximal activation. Inside nascent virions, becomes partially activated by binding to the viral DNA, allowing it to cleave the cofactor that binds to the protease and fully activates it. Actin, like the viral protease cofactor, seems to act as a cofactor in the cleavage of cytokeratin 18 and of actin itself. Functionally, cleaves viral precursor proteins (pTP, pIIIa, pVI, pVII, pVIII, and pX) inside newly assembled particles giving rise to mature virions. Protease complexed to its cofactor slides along the viral DNA to specifically locate and cleave the viral precursors. Mature virions have a weakened organization compared to the unmature virions, thereby facilitating subsequent uncoating. Without maturation, the particle lacks infectivity and is unable to uncoat. Late in adenovirus infection, in the cytoplasm, may participate in the cytoskeleton destruction. Cleaves host cell cytoskeletal keratins K7 and K18. In Human adenovirus D serotype 17 (HAdV-17), this protein is Protease.